Reading from the N-terminus, the 229-residue chain is uncharacterized protein (229 aa).

Transmembrane regions (helical) follow at residues 6-26, 36-56, 80-99, 114-134, 144-164, 174-194, and 207-224; these read LFFV…FLPT, LVSV…ILLA, SVYD…HRIY, VLSV…HLII, IFEY…ATML, FYYH…IYKF, and YVEA…VLSS.

The protein belongs to the mimivirus L68/R809 family.

It localises to the membrane. This is an uncharacterized protein from Acanthamoeba polyphaga (Amoeba).